A 215-amino-acid polypeptide reads, in one-letter code: Nucleoside triphosphate pyrophosphatase (215 aa).

The active-site Proton acceptor is the D77.

It belongs to the Maf family. A divalent metal cation serves as cofactor.

The protein localises to the cytoplasm. It catalyses the reaction a ribonucleoside 5'-triphosphate + H2O = a ribonucleoside 5'-phosphate + diphosphate + H(+). The enzyme catalyses a 2'-deoxyribonucleoside 5'-triphosphate + H2O = a 2'-deoxyribonucleoside 5'-phosphate + diphosphate + H(+). Its function is as follows. Nucleoside triphosphate pyrophosphatase. May have a dual role in cell division arrest and in preventing the incorporation of modified nucleotides into cellular nucleic acids. This Rickettsia peacockii (strain Rustic) protein is Nucleoside triphosphate pyrophosphatase.